The sequence spans 582 residues: Colicin-E9 (582 aa).

5 disordered regions span residues 1-74 (MSGG…SGGG), 246-270 (SPGVTNNTDKDVRPAGFTQGGNTRD), 294-321 (PDQVKQRQDEENRRQQEWDATHPVEAAE), 422-489 (ADAA…IADK), and 510-542 (SKDPELSKNLNPSNKSSVSKGYSPFTPKNQQVG). The span at 20-35 (INGGPTGIGVSGGASD) shows a compositional bias: gly residues. Over residues 36 to 45 (GSGWSSENNP) the composition is skewed to low complexity. The segment covering 46 to 74 (WGGGSGSGIHWGGGSGRGNGGGNGNSGGG) has biased composition (gly residues). Composition is skewed to basic and acidic residues over residues 297-321 (VKQRQDEENRRQQEWDATHPVEAAE), 430-453 (QERRKQKENKEKDAKDKLDKESKR), and 465-476 (PVGDKWLDDAGK). Positions 516–529 (SKNLNPSNKSSVSK) are enriched in low complexity. Zn(2+)-binding residues include H550, H575, and H579.

Belongs to the colicin/pyosin nuclease family.

Its function is as follows. This plasmid-coded bactericidal protein is an endonuclease active on both single- and double-stranded DNA but with undefined specificity. In terms of biological role, colicins are polypeptide toxins produced by and active against E.coli and closely related bacteria. This chain is Colicin-E9 (col), found in Escherichia coli.